Reading from the N-terminus, the 396-residue chain is Elongation factor Tu (396 aa).

Residues 11 to 205 (KPHVNIGTIG…VVDEYIPTPK (195 aa)) enclose the tr-type G domain. Residues 20–27 (GHVDHGKT) are G1. Position 20–27 (20–27 (GHVDHGKT)) interacts with GTP. Residue Thr27 coordinates Mg(2+). Positions 61–65 (GITIN) are G2. The G3 stretch occupies residues 82-85 (DAPG). Residues 82–86 (DAPGH) and 137–140 (NKTD) contribute to the GTP site. Residues 137–140 (NKTD) form a G4 region. Positions 175-177 (SAL) are G5.

Belongs to the TRAFAC class translation factor GTPase superfamily. Classic translation factor GTPase family. EF-Tu/EF-1A subfamily. Monomer.

It is found in the cytoplasm. It carries out the reaction GTP + H2O = GDP + phosphate + H(+). GTP hydrolase that promotes the GTP-dependent binding of aminoacyl-tRNA to the A-site of ribosomes during protein biosynthesis. The polypeptide is Elongation factor Tu (Limosilactobacillus fermentum (strain NBRC 3956 / LMG 18251) (Lactobacillus fermentum)).